The following is a 246-amino-acid chain: Complement C1q subcomponent subunit C (246 aa).

The N-terminal stretch at 1 to 29 is a signal peptide; sequence MVVGPSCQPPCGLCLLLLFLLALPLRSQA. The region spanning 32 to 113 is the Collagen-like domain; it reads GCYGIPGMPG…GPPGEPGVEG (82 aa). 4-hydroxyproline occurs at positions 37, 40, 43, 46, and 64. Residues 44–116 form a disordered region; the sequence is GAPGKDGHDG…GEPGVEGRYK (73 aa). 5-hydroxylysine is present on lysine 76. O-linked (Gal...) hydroxylysine glycosylation occurs at lysine 76. A 4-hydroxyproline mark is found at proline 82, proline 97, proline 100, and proline 106. Positions 99–108 are enriched in pro residues; it reads DPGPRGPPGE. Positions 116 to 246 constitute a C1q domain; that stretch reads KQKHQSVFTV…VFSGFLLFPD (131 aa). An intrachain disulfide couples cysteine 180 to cysteine 194.

As to quaternary structure, core component of the complement C1 complex, a calcium-dependent complex composed of 1 molecule of the C1Q subcomplex, 2 molecules of C1R and 2 molecules of C1S. The C1Q subcomplex is composed 18 subunits: 3 chains of C1QA, C1QB, and C1QC trimerize to form 6 collagen-like triple helices connected to six globular ligand-recognition modules (C1q domain). O-linked glycans consist of Glc-Gal disaccharides bound to the oxygen atom of post-translationally added hydroxyl groups.

The protein resides in the secreted. Its subcellular location is the cell surface. With respect to regulation, the C1Q subcomplex is inhibited by sulfated molecules, such as triterpenoid sulfates, heparan sulfate, or chondroitin sulfates. Functionally, core component of the complement C1 complex, a multiprotein complex that initiates the classical pathway of the complement system, a cascade of proteins that leads to phagocytosis and breakdown of pathogens and signaling that strengthens the adaptive immune system. The classical complement pathway is initiated by the C1Q subcomplex of the C1 complex, which specifically binds IgG or IgM immunoglobulins complexed with antigens, forming antigen-antibody complexes on the surface of pathogens: C1QA, together with C1QB and C1QC, specifically recognizes and binds the Fc regions of IgG or IgM via its C1q domain. Immunoglobulin-binding activates the proenzyme C1R, which cleaves C1S, initiating the proteolytic cascade of the complement system. The C1Q subcomplex is activated by a hexamer of IgG complexed with antigens, while it is activated by a pentameric IgM. The C1Q subcomplex also recognizes and binds phosphatidylserine exposed on the surface of cells undergoing programmed cell death, possibly promoting activation of the complement system. This is Complement C1q subcomponent subunit C from Mus musculus (Mouse).